We begin with the raw amino-acid sequence, 429 residues long: D-galactonate dehydratase family member Caci_4410 (429 aa).

Residues 1–22 (MTDANHLLDPSGALPQTRPPWT) form a disordered region. A Mg(2+)-binding site is contributed by aspartate 233. Histidine 235 serves as a coordination point for D-arabinonate. Mg(2+) is bound by residues glutamate 259 and glutamate 285. Residues glutamate 285, arginine 306, histidine 335, and glutamate 362 each coordinate D-arabinonate.

It belongs to the mandelate racemase/muconate lactonizing enzyme family. GalD subfamily.

Functionally, has no detectable activity with D-mannonate and with a panel of 70 other acid sugars (in vitro), in spite of the conservation of the residues that are expected to be important for catalytic activity and cofactor binding. May have evolved a divergent function. The sequence is that of D-galactonate dehydratase family member Caci_4410 from Catenulispora acidiphila (strain DSM 44928 / JCM 14897 / NBRC 102108 / NRRL B-24433 / ID139908).